Here is a 1417-residue protein sequence, read N- to C-terminus: Cytoadherence-linked asexual protein 3.1 (1417 aa).

The first 24 residues, 1 to 24 (MVSFFKTPIFILIIFLYLNEKVIC), serve as a signal peptide directing secretion. 4 disulfide bridges follow: C333/C361, C407/C413, C517/C545, and C521/C542. Residues 1204 to 1224 (LANGFMYAFCFFAISQMYAYF) form a helical membrane-spanning segment. The segment at 1383–1417 (TYIDTEKMNEADSADSDDEKDSDTPDDELMISRFH) is disordered. Over residues 1394–1411 (DSADSDDEKDSDTPDDEL) the composition is skewed to acidic residues.

As to quaternary structure, self-associates. Component of the RhopH complex. RhopH complex is at least composed of CLAG3.1/CLAG3.2, RhopH2 and RhopH3 with a 1:1:1 subunit stoichiometry. CLAG3.1/CLAG3.2 mediates subunit association through independent contacts with RhopH2 and RhopH3, which do not directly interact with one another. Interacts with RhopH2. Interacts with RhopH3.

It is found in the host cell membrane. The protein resides in the host cytoplasm. The protein localises to the cytoplasmic vesicle. It localises to the secretory vesicle. Its subcellular location is the rhoptry. Participates in the formation of new permeability pathways in Plasmodium-infected erythrocytes enabling the uptake of nutrients from the blood plasma. The sequence is that of Cytoadherence-linked asexual protein 3.1 from Plasmodium falciparum.